Reading from the N-terminus, the 105-residue chain is Prokineticin-1 (105 aa).

A signal peptide spans 1–19 (MRGAVQVFIMLLLATVSDC). Intrachain disulfides connect C26–C38, C32–C50, C37–C78, C60–C86, and C80–C96.

It belongs to the AVIT (prokineticin) family.

It is found in the secreted. Functionally, potently contracts gastrointestinal (GI) smooth muscle. Induces proliferation, migration and fenestration (the formation of membrane discontinuities) in capillary endothelial cells derived from endocrine glands. Has little or no effect on a variety of other endothelial and non-endothelial cell types. Induces proliferation and differentiation, but not migration, of enteric neural crest cells. Directly influences neuroblastoma progression by promoting the proliferation and migration of neuroblastoma cells. Positively regulates PTGS2 expression and prostaglandin synthesis. May play a role in placentation. May play a role in normal and pathological testis angiogenesis. This is Prokineticin-1 (Prok1) from Rattus norvegicus (Rat).